A 513-amino-acid polypeptide reads, in one-letter code: NAD(P)H-quinone oxidoreductase subunit 2, chloroplastic (513 aa).

14 consecutive transmembrane segments (helical) span residues Asn11–Ile31, Ser38–Phe58, Gly78–Ser98, Phe112–Leu132, Val133–Ala153, Leu167–Leu187, Phe219–Ile239, Pro256–Thr276, Trp290–Ala310, Met318–Asn338, Tyr348–Leu368, Ala389–Phe409, His422–Leu442, and Leu478–Ile498.

This sequence belongs to the complex I subunit 2 family. As to quaternary structure, NDH is composed of at least 16 different subunits, 5 of which are encoded in the nucleus.

It localises to the plastid. Its subcellular location is the chloroplast thylakoid membrane. It catalyses the reaction a plastoquinone + NADH + (n+1) H(+)(in) = a plastoquinol + NAD(+) + n H(+)(out). The enzyme catalyses a plastoquinone + NADPH + (n+1) H(+)(in) = a plastoquinol + NADP(+) + n H(+)(out). Functionally, NDH shuttles electrons from NAD(P)H:plastoquinone, via FMN and iron-sulfur (Fe-S) centers, to quinones in the photosynthetic chain and possibly in a chloroplast respiratory chain. The immediate electron acceptor for the enzyme in this species is believed to be plastoquinone. Couples the redox reaction to proton translocation, and thus conserves the redox energy in a proton gradient. This chain is NAD(P)H-quinone oxidoreductase subunit 2, chloroplastic, found in Staurastrum punctulatum (Green alga).